A 332-amino-acid chain; its full sequence is Ribosomal RNA small subunit methyltransferase H (332 aa).

Residues 39-41 (GGY), Asp56, Phe83, Asp100, and Gln107 contribute to the S-adenosyl-L-methionine site.

This sequence belongs to the methyltransferase superfamily. RsmH family.

It localises to the cytoplasm. The catalysed reaction is cytidine(1402) in 16S rRNA + S-adenosyl-L-methionine = N(4)-methylcytidine(1402) in 16S rRNA + S-adenosyl-L-homocysteine + H(+). Specifically methylates the N4 position of cytidine in position 1402 (C1402) of 16S rRNA. This Bartonella quintana (strain Toulouse) (Rochalimaea quintana) protein is Ribosomal RNA small subunit methyltransferase H.